The sequence spans 495 residues: Serine/threonine-protein kinase F (495 aa).

Residues 46–314 form the Protein kinase domain; that stretch reads YLPVKLLGQG…ASAEEVLAVL (269 aa). Residues 52–60 and lysine 77 contribute to the ATP site; that span reads LGQGGFGAA. Aspartate 187 functions as the Proton acceptor in the catalytic mechanism. Residues 316–354 are disordered; the sequence is GGKGNQGKAPPGATVSTPQGTNTQIQPTPASSASPLTAP. Residues 329–350 show a composition bias toward polar residues; sequence TVSTPQGTNTQIQPTPASSASP.

Belongs to the protein kinase superfamily. Ser/Thr protein kinase family.

The enzyme catalyses L-seryl-[protein] + ATP = O-phospho-L-seryl-[protein] + ADP + H(+). It carries out the reaction L-threonyl-[protein] + ATP = O-phospho-L-threonyl-[protein] + ADP + H(+). This Synechocystis sp. (strain ATCC 27184 / PCC 6803 / Kazusa) protein is Serine/threonine-protein kinase F (spkF).